The sequence spans 664 residues: Intraflagellar transport protein 70B (664 aa).

7 TPR repeats span residues 11-44 (DGEF…SPRS), 45-78 (RAGL…HPEL), 153-186 (YDGQ…SGYQ), 188-220 (DISY…GIRQ), 385-418 (LTEQ…YDET), 423-456 (IPVL…CNDH), and 458-491 (VWKL…NYDN). The stretch at 507–534 (YIMTSQNEEAEELMRKIEKEEEQLSYDD) forms a coiled coil. The stretch at 543-576 (CIVNLVIGTLYCAKGNYDFGISRVIKSLEPYHKK) is one TPR 8 repeat.

Belongs to the TTC30/dfy-1/fleer family. Interacts with the IFT B complex components IFT27, IFT46, IFT74, IFT52, IFT57, IFT80, IFT81 and IFT88. Interacts with KIF17.

It localises to the cell projection. The protein localises to the cilium. Required for polyglutamylation of axonemal tubulin. Plays a role in anterograde intraflagellar transport (IFT), the process by which cilia precursors are transported from the base of the cilium to the site of their incorporation at the tip. The sequence is that of Intraflagellar transport protein 70B (Ift70b) from Rattus norvegicus (Rat).